The following is a 469-amino-acid chain: Glutamate--tRNA ligase (469 aa).

The short motif at 9-19 (PSPTGFLHVGG) is the 'HIGH' region element. The Zn(2+) site is built by Cys-98, Cys-100, Cys-125, and Asp-127. The 'KMSKS' region signature appears at 236-240 (KLSKR). ATP is bound at residue Lys-239.

The protein belongs to the class-I aminoacyl-tRNA synthetase family. Glutamate--tRNA ligase type 1 subfamily. As to quaternary structure, monomer. Zn(2+) serves as cofactor.

The protein localises to the cytoplasm. The enzyme catalyses tRNA(Glu) + L-glutamate + ATP = L-glutamyl-tRNA(Glu) + AMP + diphosphate. Functionally, catalyzes the attachment of glutamate to tRNA(Glu) in a two-step reaction: glutamate is first activated by ATP to form Glu-AMP and then transferred to the acceptor end of tRNA(Glu). The polypeptide is Glutamate--tRNA ligase (Shewanella sp. (strain MR-4)).